A 309-amino-acid polypeptide reads, in one-letter code: Carbamate kinase 2 (309 aa).

The protein belongs to the carbamate kinase family.

It is found in the cytoplasm. The catalysed reaction is hydrogencarbonate + NH4(+) + ATP = carbamoyl phosphate + ADP + H2O + H(+). Its pathway is metabolic intermediate metabolism; carbamoyl phosphate degradation; CO(2) and NH(3) from carbamoyl phosphate: step 1/1. In Staphylococcus epidermidis (strain ATCC 12228 / FDA PCI 1200), this protein is Carbamate kinase 2 (arcC2).